We begin with the raw amino-acid sequence, 274 residues long: (R)-stereoselective amidase (274 aa).

One can recognise a CN hydrolase domain in the interval 1 to 234 (MKIELVQLAG…EVRHVVELDL (234 aa)). Glu-40 (proton acceptor) is an active-site residue. The active-site Proton donor is Lys-108. The active-site Nucleophile is Cys-140.

In terms of assembly, monomer.

The enzyme catalyses (R)-piperazine-2-carboxamide + H2O = (R)-piperazine-2-carboxylate + NH4(+). The catalysed reaction is beta-alaninamide + H2O = beta-alanine + NH4(+). With respect to regulation, completely inhibited by p-chloromercuribenzoate, N-ethylmaleimide, MnSO(4), MnCl(2), CoCl(2), NiCl(2), CuSO(4), CuCl(2), ZnSO(4), ZnCl(2), AgNO(3), CdCl(2), HgCl(2) and PbCl(2). Partially inhibited by FeCl(3) and Fe(NH(4))(2)(SO(4))(2). Slightly enhanced by dithiothreitol. Unaffected by LiBr, H(2)BO(3), NaCl, MgSO(4), MgCl(2), AlCl(3), KCl, CaCl(2), CrCl(3), RbCl, Na(2)MoO(4), (NH(4))(6)Mo(7)O(24), CsCl and BaCl(2). Unaffected by the chelating agents o-phenanthroline, 8-hydroxyquinoline, enthylenediaminetetraacetic acid and alpha,alpha'-dipyridyl. Not inhibited by the carbonyl reagents hydroxylamine, phenylhydrazine, hydrazine, D,L-penicillamine and D-cycloserine. Not affected by the serine protease inhibitor phenylmethanesulfonyl fluoride, the serine/cysteine protease inhibitor leupeptine or the aspartic protease inhibitor pepstatin. In terms of biological role, hydrolyzes (R)-piperazine-2-carboxamide and (R)-piperazine-2-tert-butylcarboxamide with strict R-stereoselectivity. Also active towards beta-alaninamide, piperidine-3-carboxmide, D-glutaminamide and slightly active towards L-glutaminamide and piperidine-4-carboxamide. The polypeptide is (R)-stereoselective amidase (Pseudomonas sp).